Here is a 311-residue protein sequence, read N- to C-terminus: tRNA (guanine-N(7)-)-methyltransferase (311 aa).

Residues Glu28, Glu53, and Asp103 each coordinate S-adenosyl-L-methionine. Asp103 is a catalytic residue. 2 residues coordinate substrate: Lys107 and Asp139.

Belongs to the class I-like SAM-binding methyltransferase superfamily. TrmB family.

It carries out the reaction guanosine(46) in tRNA + S-adenosyl-L-methionine = N(7)-methylguanosine(46) in tRNA + S-adenosyl-L-homocysteine. Its pathway is tRNA modification; N(7)-methylguanine-tRNA biosynthesis. In terms of biological role, catalyzes the formation of N(7)-methylguanine at position 46 (m7G46) in tRNA. The protein is tRNA (guanine-N(7)-)-methyltransferase of Thermus thermophilus (strain ATCC BAA-163 / DSM 7039 / HB27).